Here is a 332-residue protein sequence, read N- to C-terminus: NADH-quinone oxidoreductase subunit H (332 aa).

Helical transmembrane passes span Thr11–Leu31, Val77–Ile97, Val110–Gly130, Ile156–Ile176, Leu182–Glu202, Asn240–Ile260, Ile268–Val288, and Ile307–Asn327.

It belongs to the complex I subunit 1 family. NDH-1 is composed of 14 different subunits. Subunits NuoA, H, J, K, L, M, N constitute the membrane sector of the complex.

Its subcellular location is the cell inner membrane. The enzyme catalyses a quinone + NADH + 5 H(+)(in) = a quinol + NAD(+) + 4 H(+)(out). Functionally, NDH-1 shuttles electrons from NADH, via FMN and iron-sulfur (Fe-S) centers, to quinones in the respiratory chain. The immediate electron acceptor for the enzyme in this species is believed to be ubiquinone. Couples the redox reaction to proton translocation (for every two electrons transferred, four hydrogen ions are translocated across the cytoplasmic membrane), and thus conserves the redox energy in a proton gradient. This subunit may bind ubiquinone. The chain is NADH-quinone oxidoreductase subunit H from Pelagibacter ubique (strain HTCC1062).